The sequence spans 111 residues: Irditoxin subunit B (111 aa).

The first 19 residues, 1-19 (MKTLLLAVAVVAFVCLGSA), serve as a signal peptide directing secretion. A propeptide spanning residues 20-34 (DQLGLGRQQIDWGKG) is cleaved from the precursor. Gln-35 is subject to Pyrrolidone carboxylic acid. Cystine bridges form between Cys-44–Cys-68, Cys-47–Cys-55, Cys-61–Cys-87, Cys-91–Cys-102, and Cys-103–Cys-108.

It belongs to the three-finger toxin family. Ancestral subfamily. Boigatoxin sub-subfamily. In terms of assembly, heterodimer of A and B chains; disulfide-linked. In terms of tissue distribution, expressed by the venom gland.

Its subcellular location is the secreted. In terms of biological role, this bird and reptile-specific postsynaptic neurotoxin inhibits the chick muscle alpha-1-beta-1-gamma-delta (CHRNA1-CHRNB1-CHRNG-CHRND) nicotinic acetylcholine receptor (nAChR) 100-fold more compared with the mouse receptor. In vivo, produces rapid flaccid paralysis, dyspnea and increased respiratory rate in geckos. At sublethal doses geckos were immobilized for up to three days and then recovered. Chicks injected with lethal doses showed rapid onset of inactivity, dyspnea and neck droop, and no extended paralysis with survival was seen. In Boiga irregularis (Brown tree snake), this protein is Irditoxin subunit B.